The primary structure comprises 57 residues: UPF0057 membrane protein T23F2.3 (57 aa).

A run of 2 helical transmembrane segments spans residues 4–24 and 36–56; these read TCTDIPKFICAVLLPPIGVFL and ILLTILGYIPGIIYACYVILA.

It belongs to the UPF0057 (PMP3) family.

The protein localises to the membrane. This Caenorhabditis elegans protein is UPF0057 membrane protein T23F2.3.